A 32-amino-acid polypeptide reads, in one-letter code: ilv operon leader peptide (32 aa).

Functionally, this protein is involved in control of the biosynthesis of isoleucine, leucine, and valine. In Escherichia coli (strain K12), this protein is ilv operon leader peptide (ivbL).